Here is a 627-residue protein sequence, read N- to C-terminus: Muscarinic acetylcholine receptor gar-2 (627 aa).

The Extracellular portion of the chain corresponds to 1-9 (MAVASVLLA). Residues 10–30 (LFMLFLSIVTVIGNLAVLLSY) traverse the membrane as a helical segment. Residues 31–41 (YLDKNIRQPTN) are Cytoplasmic-facing. The chain crosses the membrane as a helical span at residues 42–62 (YFIFSLAISDLLIGLEGIPVY). Residues 63-81 (TAFYLNNNEWIWGDVLCDL) lie on the Extracellular side of the membrane. Cysteines 79 and 160 form a disulfide. Residues 82 to 102 (WLSIDYIVCLASIYTVLGITV) traverse the membrane as a helical segment. Over 103–122 (DRYYSVKKPATYRNWRTPGR) the chain is Cytoplasmic. The chain crosses the membrane as a helical span at residues 123 to 143 (VVLIIIFIWLVPSILFSVSIF). Residues 144 to 172 (GYGTFTGTGRILKETECYVQFMTNPYLNM) are Extracellular-facing. A helical membrane pass occupies residues 173–193 (GMYISYYWTTLFVMLYLYWGI). The Cytoplasmic portion of the chain corresponds to 194–549 (YRAAKKLALK…ENRARKALRT (356 aa)). Disordered stretches follow at residues 222–266 (VSVR…VGTP), 423–442 (REDE…ENGG), and 449–475 (ANDE…HDPN). Residues 231 to 264 (NSSSDSPNDTSNSSKCFRTAPPTTTVQTTQTNVG) show a composition bias toward low complexity. Basic and acidic residues predominate over residues 459-475 (KESEQKEEMTPENHDPN). A helical transmembrane segment spans residues 550 to 570 (ITFILGSFIILWTPFYVLATI). The Extracellular segment spans residues 571–586 (YGFCETCKASPSFNTL). The helical transmembrane segment at 587-609 (YTISYYLCYMNSPLNPFCYAMAN) threads the bilayer. The Cytoplasmic portion of the chain corresponds to 610 to 627 (QQFKKTLTRIFKGDFRRV).

This sequence belongs to the G-protein coupled receptor 1 family. Muscarinic acetylcholine receptor subfamily. Expressed in putative sensory neurons, many cells of the ventral cord and in the HSN motor neurons. Expressed in some cholinergic motor neurons and GABAergic motor neurons, which are the two major types of ventral cord motor neurons.

The protein localises to the cell membrane. Its subcellular location is the cell projection. It is found in the axon. In terms of biological role, the muscarinic acetylcholine receptor mediates various cellular responses, including inhibition of adenylate cyclase, breakdown of phosphoinositides and modulation of potassium channels through the action of G proteins. Primary transducing effect is Pi turnover. Regulates the activity of ventral cord motor neurons. Couples to the G(o)-alpha G-protein subunit goa-1 to negatively regulate cholinergic receptor activity in the presence of high levels of the neurotransmitter acetylcholine in ventral cord motor neurons. As acetylcholine depolarizes body wall muscles, modulation of acetylcholine levels most likely results in the control locomotory behavior and egg-laying. This Caenorhabditis elegans protein is Muscarinic acetylcholine receptor gar-2.